Consider the following 382-residue polypeptide: V-type proton ATPase subunit C 1 (382 aa).

Thr2 carries the post-translational modification N-acetylthreonine.

It belongs to the V-ATPase C subunit family. As to quaternary structure, V-ATPase is a heteromultimeric enzyme made up of two complexes: the ATP-hydrolytic V1 complex and the proton translocation V0 complex. The V1 complex consists of three catalytic AB heterodimers that form a heterohexamer, three peripheral stalks each consisting of EG heterodimers, one central rotor including subunits D and F, and the regulatory subunits C and H. The proton translocation complex V0 consists of the proton transport subunit a, a ring of proteolipid subunits c9c'', rotary subunit d, subunits e and f, and the accessory subunits ATP6AP1/Ac45 and ATP6AP2/PRR.

It is found in the cytoplasmic vesicle. It localises to the secretory vesicle. The protein resides in the synaptic vesicle membrane. The protein localises to the clathrin-coated vesicle membrane. Its function is as follows. Subunit of the V1 complex of vacuolar(H+)-ATPase (V-ATPase), a multisubunit enzyme composed of a peripheral complex (V1) that hydrolyzes ATP and a membrane integral complex (V0) that translocates protons. V-ATPase is responsible for acidifying and maintaining the pH of intracellular compartments and in some cell types, is targeted to the plasma membrane, where it is responsible for acidifying the extracellular environment. Subunit C is necessary for the assembly of the catalytic sector of the enzyme and is likely to have a specific function in its catalytic activity. In Macaca fascicularis (Crab-eating macaque), this protein is V-type proton ATPase subunit C 1 (ATP6V1C1).